A 107-amino-acid chain; its full sequence is Translation initiation factor IF-1, chloroplastic (107 aa).

Residues 8–83 (REKKNPREAK…SKGRIIYRLP (76 aa)) enclose the S1-like domain. The segment at 81 to 107 (RLPHKDSKRTEDSKDTEDLKDTKDSKD) is disordered. Basic and acidic residues predominate over residues 83–107 (PHKDSKRTEDSKDTEDLKDTKDSKD).

It belongs to the IF-1 family. Component of the 30S ribosomal translation pre-initiation complex which assembles on the 30S ribosome in the order IF-2 and IF-3, IF-1 and N-formylmethionyl-tRNA(fMet); mRNA recruitment can occur at any time during PIC assembly.

It localises to the plastid. It is found in the chloroplast. One of the essential components for the initiation of protein synthesis. Stabilizes the binding of IF-2 and IF-3 on the 30S subunit to which N-formylmethionyl-tRNA(fMet) subsequently binds. Helps modulate mRNA selection, yielding the 30S pre-initiation complex (PIC). Upon addition of the 50S ribosomal subunit IF-1, IF-2 and IF-3 are released leaving the mature 70S translation initiation complex. The protein is Translation initiation factor IF-1, chloroplastic of Saccharum hybrid (Sugarcane).